The following is a 230-amino-acid chain: Cytidylate kinase (230 aa).

12–20 (GPSGAGKGT) is an ATP binding site.

Belongs to the cytidylate kinase family. Type 1 subfamily.

Its subcellular location is the cytoplasm. The catalysed reaction is CMP + ATP = CDP + ADP. It carries out the reaction dCMP + ATP = dCDP + ADP. The chain is Cytidylate kinase from Shewanella putrefaciens (strain CN-32 / ATCC BAA-453).